Here is a 289-residue protein sequence, read N- to C-terminus: ATP synthase gamma chain (289 aa).

This sequence belongs to the ATPase gamma chain family. F-type ATPases have 2 components, CF(1) - the catalytic core - and CF(0) - the membrane proton channel. CF(1) has five subunits: alpha(3), beta(3), gamma(1), delta(1), epsilon(1). CF(0) has three main subunits: a, b and c.

It localises to the cell inner membrane. Functionally, produces ATP from ADP in the presence of a proton gradient across the membrane. The gamma chain is believed to be important in regulating ATPase activity and the flow of protons through the CF(0) complex. The polypeptide is ATP synthase gamma chain (Haemophilus influenzae (strain 86-028NP)).